Reading from the N-terminus, the 93-residue chain is Small ribosomal subunit protein bS20 (93 aa).

Positions 72–93 are disordered; sequence KNTASRKKSRLTRKFNSVYKAS. Basic residues predominate over residues 74–84; it reads TASRKKSRLTR.

This sequence belongs to the bacterial ribosomal protein bS20 family.

Its function is as follows. Binds directly to 16S ribosomal RNA. This Carboxydothermus hydrogenoformans (strain ATCC BAA-161 / DSM 6008 / Z-2901) protein is Small ribosomal subunit protein bS20.